A 389-amino-acid polypeptide reads, in one-letter code: Na(+)/H(+) antiporter NhaA (389 aa).

The next 11 membrane-spanning stretches (helical) occupy residues 17 to 37 (ILLL…LAGL), 59 to 79 (LLLW…GLEV), 95 to 115 (SLPT…YLLF), 124 to 144 (VGWA…MALL), 154 to 174 (VFLL…IALF), 177 to 197 (SDLS…LVAL), 213 to 233 (LVLW…GVII), 261 to 281 (FLIL…NMSL), 287 to 307 (PVPV…VMLF), 328 to 348 (IAPV…IASL), and 363 to 383 (LGTL…LSKV).

The protein belongs to the NhaA Na(+)/H(+) (TC 2.A.33) antiporter family.

The protein localises to the cell inner membrane. It catalyses the reaction Na(+)(in) + 2 H(+)(out) = Na(+)(out) + 2 H(+)(in). In terms of biological role, na(+)/H(+) antiporter that extrudes sodium in exchange for external protons. The protein is Na(+)/H(+) antiporter NhaA of Shewanella sp. (strain ANA-3).